The sequence spans 542 residues: Organic anion transporter 3 (542 aa).

Topologically, residues 1–9 (MTFSEILDR) are cytoplasmic. Position 4 is a phosphoserine (Ser4). A helical membrane pass occupies residues 10 to 30 (VGSMGPFQFLHVALLGFPILG). The Extracellular segment spans residues 31–123 (MANHNLLQIF…LVCSSNKLKE (93 aa)). A glycan (N-linked (GlcNAc...) asparagine) is linked at Asn86. The helical transmembrane segment at 124–144 (MAQSIFMAGILIGGLVLGDLS) threads the bilayer. Residues 145–150 (DRFGRK) are Cytoplasmic-facing. A helical membrane pass occupies residues 151 to 171 (PILTCCYLLLAASGSSTAFSP). The Extracellular portion of the chain corresponds to 172–176 (TLPIY). The helical transmembrane segment at 177–197 (MVFRFLCGFSISGISLSTVIL) threads the bilayer. The Cytoplasmic portion of the chain corresponds to 198 to 212 (NVEWVPTKMRAITST). A helical transmembrane segment spans residues 213-233 (AIGYCYTIGQFILPGLAYAIP). The Extracellular segment spans residues 234 to 236 (QWR). The chain crosses the membrane as a helical span at residues 237–257 (WLQLTVSVPYFIFSLLSWWIP). The Cytoplasmic portion of the chain corresponds to 258 to 327 (ESIRWLVLAG…FRTPILRRVT (70 aa)). The helical transmembrane segment at 328–348 (LCLSLAWFATGFAYYSLAMGV) threads the bilayer. At 349 to 354 (EEFGVN) the chain is on the extracellular side. A helical membrane pass occupies residues 355 to 375 (IYILQIIFGGVDIPAKFITIL). Residues 376 to 389 (SLSYLGRHITQGAA) are Cytoplasmic-facing. Residues 390–410 (LILAGAAILSLIFVPMDMSLL) form a helical membrane-spanning segment. Arg411 is a topological domain (extracellular). The helical transmembrane segment at 412–432 (TILAVFGKGCLSGSFSCLFLY) threads the bilayer. The Cytoplasmic segment spans residues 433 to 471 (TSELFPTVIRQTGMGISNVWARVGSMISPLVKITGEIQP). A helical membrane pass occupies residues 472 to 492 (FIPNIIYGTVALLGGSAALFL). Over 493-542 (PETLNQPLPETLEDMENWFLQSKKLKQEPEAEKASQRIPLQPSGPGVDRS) the chain is Extracellular. Residues 518 to 527 (KQEPEAEKAS) show a composition bias toward basic and acidic residues. Residues 518–542 (KQEPEAEKASQRIPLQPSGPGVDRS) form a disordered region.

Belongs to the major facilitator (TC 2.A.1) superfamily. Organic cation transporter (TC 2.A.1.19) family.

The protein resides in the basolateral cell membrane. The catalysed reaction is estrone 3-sulfate(out) + glutarate(in) = estrone 3-sulfate(in) + glutarate(out). It catalyses the reaction estrone 3-sulfate(in) + 2-oxoglutarate(out) = estrone 3-sulfate(out) + 2-oxoglutarate(in). The enzyme catalyses glutarate(in) + 2-oxoglutarate(out) = glutarate(out) + 2-oxoglutarate(in). It carries out the reaction urate(in) + 2-oxoglutarate(out) = urate(out) + 2-oxoglutarate(in). The catalysed reaction is taurocholate(out) + glutarate(in) = taurocholate(in) + glutarate(out). It catalyses the reaction dehydroepiandrosterone 3-sulfate(out) + glutarate(in) = dehydroepiandrosterone 3-sulfate(in) + glutarate(out). The enzyme catalyses prostaglandin F2alpha(out) + glutarate(in) = prostaglandin F2alpha(in) + glutarate(out). It carries out the reaction prostaglandin F2alpha(out) + 2-oxoglutarate(in) = prostaglandin F2alpha(in) + 2-oxoglutarate(out). The catalysed reaction is (R)-carnitine(out) + 2-oxoglutarate(in) = (R)-carnitine(in) + 2-oxoglutarate(out). It catalyses the reaction glutarate(in) + (R)-carnitine(out) = glutarate(out) + (R)-carnitine(in). The enzyme catalyses prostaglandin E2(out) + 2-oxoglutarate(in) = prostaglandin E2(in) + 2-oxoglutarate(out). It carries out the reaction prostaglandin E2(out) + glutarate(in) = prostaglandin E2(in) + glutarate(out). The catalysed reaction is urate(in) + glutarate(out) = urate(out) + glutarate(in). It catalyses the reaction taurocholate(out) + 2-oxoglutarate(in) = taurocholate(in) + 2-oxoglutarate(out). The enzyme catalyses dehydroepiandrosterone 3-sulfate(out) + 2-oxoglutarate(in) = dehydroepiandrosterone 3-sulfate(in) + 2-oxoglutarate(out). It carries out the reaction kynurenate(out) + a dicarboxylate(in) = kynurenate(in) + a dicarboxylate(out). The catalysed reaction is (indol-3-yl)acetate(out) + a dicarboxylate(in) = (indol-3-yl)acetate(in) + a dicarboxylate(out). It catalyses the reaction indoxyl sulfate(out) + a dicarboxylate(in) = indoxyl sulfate(in) + a dicarboxylate(out). The enzyme catalyses N-benzoylglycine(out) + a dicarboxylate(in) = N-benzoylglycine(in) + a dicarboxylate(out). It carries out the reaction 3-carboxy-4-methyl-5-propyl-2-furanpropanoate(out) + a dicarboxylate(in) = 3-carboxy-4-methyl-5-propyl-2-furanpropanoate(in) + a dicarboxylate(out). The catalysed reaction is (6R)-L-erythro-5,6,7,8-tetrahydrobiopterin(out) + a dicarboxylate(in) = (6R)-L-erythro-5,6,7,8-tetrahydrobiopterin(in) + a dicarboxylate(out). It catalyses the reaction L-erythro-7,8-dihydrobiopterin(out) + a dicarboxylate(in) = L-erythro-7,8-dihydrobiopterin(in) + a dicarboxylate(out). The enzyme catalyses L-sepiapterin(out) + a dicarboxylate(in) = L-sepiapterin(in) + a dicarboxylate(out). In terms of biological role, functions as an organic anion/dicarboxylate exchanger that couples organic anion uptake indirectly to the sodium gradient. Transports organic anions such as estrone 3-sulfate (E1S) and urate in exchange for dicarboxylates such as glutarate or ketoglutarate (2-oxoglutarate). Plays an important role in the excretion of endogenous and exogenous organic anions, especially from the kidney and the brain. E1S transport is pH- and chloride-dependent and may also involve E1S/cGMP exchange. Responsible for the transport of prostaglandin E2 (PGE2) and prostaglandin F2(alpha) (PGF2(alpha)) in the basolateral side of the renal tubule. Involved in the transport of neuroactive tryptophan metabolites kynurenate and xanthurenate. Functions as a biopterin transporters involved in the uptake and the secretion of coenzymes tetrahydrobiopterin (BH4), dihydrobiopterin (BH2) and sepiapterin to urine, thereby determining baseline levels of blood biopterins. May be involved in the basolateral transport of steviol, a metabolite of the popular sugar substitute stevioside. May participate in the detoxification/ renal excretion of drugs and xenobiotics, such as the histamine H(2)-receptor antagonists fexofenadine and cimetidine, the antibiotic benzylpenicillin (PCG), the anionic herbicide 2,4-dichloro-phenoxyacetate (2,4-D), the diagnostic agent p-aminohippurate (PAH), the antiviral acyclovir (ACV), and the mycotoxin ochratoxin (OTA), by transporting these exogenous organic anions across the cell membrane in exchange for dicarboxylates such as 2-oxoglutarate. Contributes to the renal uptake of potent uremic toxins (indoxyl sulfate (IS), indole acetate (IA), hippurate/N-benzoylglycine (HA) and 3-carboxy-4-methyl-5-propyl-2-furanpropionate (CMPF)), pravastatin, PCG, E1S and dehydroepiandrosterone sulfate (DHEAS), and is partly involved in the renal uptake of temocaprilat (an angiotensin-converting enzyme (ACE) inhibitor). May contribute to the release of cortisol in the adrenals. Involved in one of the detoxification systems on the choroid plexus (CP), removes substrates such as E1S or taurocholate (TC), PCG, 2,4-D and PAH, from the cerebrospinal fluid (CSF) to the blood for eventual excretion in urine and bile. Also contributes to the uptake of several other organic compounds such as the prostanoids prostaglandin E(2) and prostaglandin F(2-alpha), L-carnitine, and the therapeutic drugs allopurinol, 6-mercaptopurine (6-MP) and 5-fluorouracil (5-FU). Mediates the transport of PAH, PCG, and the statins pravastatin and pitavastatin, from the cerebrum into the blood circulation across the blood-brain barrier (BBB). In summary, plays a role in the efflux of drugs and xenobiotics, helping reduce their undesired toxicological effects on the body. The chain is Organic anion transporter 3 (SLC22A8) from Oryctolagus cuniculus (Rabbit).